The sequence spans 449 residues: Pentalenene oxygenase (449 aa).

Residues V251–L273 traverse the membrane as a helical segment. Position 393 (C393) interacts with heme.

This sequence belongs to the cytochrome P450 family.

The protein resides in the membrane. The catalysed reaction is pentalenene + 4 reduced [2Fe-2S]-[ferredoxin] + 2 O2 + 4 H(+) = pentalen-13-al + 4 oxidized [2Fe-2S]-[ferredoxin] + 3 H2O. It functions in the pathway antibiotic biosynthesis; neopentalenolactone biosynthesis. In terms of biological role, catalyzes the conversion of pentalenene to pentalen-13-al by stepwise oxidation via pentalen-13-ol, a precursor of neopentalenolactone antibiotic. This Streptomyces avermitilis (strain ATCC 31267 / DSM 46492 / JCM 5070 / NBRC 14893 / NCIMB 12804 / NRRL 8165 / MA-4680) protein is Pentalenene oxygenase (ptlI).